The following is a 258-amino-acid chain: Zinc import ATP-binding protein ZnuC (258 aa).

The ABC transporter domain occupies 7 to 233 (ITAKNINHAY…PAFQELFGQG (227 aa)). 39 to 46 (GPNGAGKS) lines the ATP pocket.

The protein belongs to the ABC transporter superfamily. Zinc importer (TC 3.A.1.15.5) family. In terms of assembly, the complex is composed of two ATP-binding proteins (ZnuC), two transmembrane proteins (ZnuB) and a solute-binding protein (ZnuA).

The protein resides in the cell inner membrane. The catalysed reaction is Zn(2+)(out) + ATP(in) + H2O(in) = Zn(2+)(in) + ADP(in) + phosphate(in) + H(+)(in). Functionally, part of the ABC transporter complex ZnuABC involved in zinc import. Responsible for energy coupling to the transport system. The chain is Zinc import ATP-binding protein ZnuC from Hydrogenovibrio crunogenus (strain DSM 25203 / XCL-2) (Thiomicrospira crunogena).